A 398-amino-acid chain; its full sequence is Enoyl-[acyl-carrier-protein] reductase [NADH] (398 aa).

Residues 48–53 (GASTGY), 74–75 (FE), 111–112 (DA), and 139–140 (LA) each bind NAD(+). Residue Tyr-225 coordinates substrate. Residue Tyr-235 is the Proton donor of the active site. NAD(+) contacts are provided by residues Lys-244 and 273 to 275 (VVT).

This sequence belongs to the TER reductase family. As to quaternary structure, monomer.

The enzyme catalyses a 2,3-saturated acyl-[ACP] + NAD(+) = a (2E)-enoyl-[ACP] + NADH + H(+). It functions in the pathway lipid metabolism; fatty acid biosynthesis. In terms of biological role, involved in the final reduction of the elongation cycle of fatty acid synthesis (FAS II). Catalyzes the reduction of a carbon-carbon double bond in an enoyl moiety that is covalently linked to an acyl carrier protein (ACP). This Paraburkholderia xenovorans (strain LB400) protein is Enoyl-[acyl-carrier-protein] reductase [NADH].